Here is a 121-residue protein sequence, read N- to C-terminus: Neuropeptide-like protein 7 (121 aa).

An N-terminal signal peptide occupies residues 1-22 (MYIKAALLIVVLFGVASQITSA).

Functionally, may regulate lifespan in response to food availability and oxidative stress. The protein is Neuropeptide-like protein 7 of Caenorhabditis elegans.